The following is a 185-amino-acid chain: Ribosome-recycling factor (185 aa).

It belongs to the RRF family.

It is found in the cytoplasm. In terms of biological role, responsible for the release of ribosomes from messenger RNA at the termination of protein biosynthesis. May increase the efficiency of translation by recycling ribosomes from one round of translation to another. This is Ribosome-recycling factor from Streptococcus pyogenes serotype M18 (strain MGAS8232).